Reading from the N-terminus, the 204-residue chain is Superoxide dismutase [Mn] (204 aa).

A Mn(2+)-binding site is contributed by His27. Phosphothreonine occurs at positions 34 and 70. The Mn(2+) site is built by His82, Asp164, and His168.

The protein belongs to the iron/manganese superoxide dismutase family. In terms of assembly, homodimer. Mn(2+) serves as cofactor.

It catalyses the reaction 2 superoxide + 2 H(+) = H2O2 + O2. Functionally, destroys superoxide anion radicals which are normally produced within the cells and which are toxic to biological systems. This chain is Superoxide dismutase [Mn] (sodA), found in Geobacillus stearothermophilus (Bacillus stearothermophilus).